A 339-amino-acid polypeptide reads, in one-letter code: Ribonucleoside-diphosphate reductase subunit beta (339 aa).

D87 and H121 together coordinate Fe cation. Y125 is an active-site residue. Residue H215 coordinates Fe cation.

Belongs to the ribonucleoside diphosphate reductase small chain family. As to quaternary structure, tetramer of two alpha and two beta subunits. It depends on Fe cation as a cofactor.

The catalysed reaction is a 2'-deoxyribonucleoside 5'-diphosphate + [thioredoxin]-disulfide + H2O = a ribonucleoside 5'-diphosphate + [thioredoxin]-dithiol. Functionally, provides the precursors necessary for DNA synthesis. Catalyzes the biosynthesis of deoxyribonucleotides from the corresponding ribonucleotides. This chain is Ribonucleoside-diphosphate reductase subunit beta (nrdF), found in Mycoplasma pneumoniae (strain ATCC 29342 / M129 / Subtype 1) (Mycoplasmoides pneumoniae).